Reading from the N-terminus, the 443-residue chain is ATP-dependent protease ATPase subunit HslU (443 aa).

Residues isoleucine 18, 60 to 65 (GVGKTE), aspartate 256, glutamate 321, and arginine 393 contribute to the ATP site.

Belongs to the ClpX chaperone family. HslU subfamily. As to quaternary structure, a double ring-shaped homohexamer of HslV is capped on each side by a ring-shaped HslU homohexamer. The assembly of the HslU/HslV complex is dependent on binding of ATP.

The protein localises to the cytoplasm. ATPase subunit of a proteasome-like degradation complex; this subunit has chaperone activity. The binding of ATP and its subsequent hydrolysis by HslU are essential for unfolding of protein substrates subsequently hydrolyzed by HslV. HslU recognizes the N-terminal part of its protein substrates and unfolds these before they are guided to HslV for hydrolysis. This chain is ATP-dependent protease ATPase subunit HslU, found in Vibrio cholerae serotype O1 (strain ATCC 39315 / El Tor Inaba N16961).